The chain runs to 682 residues: Tail-specific protease (682 aa).

A signal peptide spans 1-22 (MNTFFRLTALAGLLALAGQSFA). The 85-residue stretch at 238 to 322 (NTEMSLSLEG…SKVRLEILPA (85 aa)) folds into the PDZ domain. Active-site charge relay system residues include Ser452, Asp463, and Lys477.

This sequence belongs to the peptidase S41A family.

The protein resides in the cell inner membrane. It catalyses the reaction The enzyme shows specific recognition of a C-terminal tripeptide, Xaa-Yaa-Zaa, in which Xaa is preferably Ala or Leu, Yaa is preferably Ala or Tyr, and Zaa is preferably Ala, but then cleaves at a variable distance from the C-terminus. A typical cleavage is -Ala-Ala-|-Arg-Ala-Ala-Lys-Glu-Asn-Tyr-Ala-Leu-Ala-Ala.. Functionally, involved in the cleavage of a C-terminal peptide of 11 residues from the precursor form of penicillin-binding protein 3 (PBP3). May be involved in protection of the bacterium from thermal and osmotic stresses. This chain is Tail-specific protease (prc), found in Salmonella typhimurium (strain LT2 / SGSC1412 / ATCC 700720).